Consider the following 568-residue polypeptide: Cytochrome P450 monooxygenase 41 (568 aa).

A helical transmembrane segment spans residues 21 to 41 (LTSLVPLILSVMVCLIATVTI). N-linked (GlcNAc...) asparagine glycosylation is found at asparagine 321 and asparagine 377. Cysteine 514 contacts heme.

The protein belongs to the cytochrome P450 family. Heme serves as cofactor.

The protein localises to the membrane. The protein operates within secondary metabolite biosynthesis. Cytochrome P450 monooxygenase that is able to use 3,5-dimethoxy-trans-stilbene and 3,5,4'-trimethoxy-trans-stilbene as substrates for oxidation. In Postia placenta (strain ATCC 44394 / Madison 698-R) (Brown rot fungus), this protein is Cytochrome P450 monooxygenase 41.